Here is a 391-residue protein sequence, read N- to C-terminus: 8-amino-7-oxononanoate synthase (391 aa).

108 to 109 (GF) contacts pyridoxal 5'-phosphate. Residue His133 coordinates substrate. Pyridoxal 5'-phosphate contacts are provided by Ser180, His208, and Thr236. Lys239 carries the post-translational modification N6-(pyridoxal phosphate)lysine. Thr353 is a substrate binding site.

Belongs to the class-II pyridoxal-phosphate-dependent aminotransferase family. BioF subfamily. In terms of assembly, homodimer. Pyridoxal 5'-phosphate is required as a cofactor.

The catalysed reaction is 6-carboxyhexanoyl-[ACP] + L-alanine + H(+) = (8S)-8-amino-7-oxononanoate + holo-[ACP] + CO2. The protein operates within cofactor biosynthesis; biotin biosynthesis. Its function is as follows. Catalyzes the decarboxylative condensation of pimeloyl-[acyl-carrier protein] and L-alanine to produce 8-amino-7-oxononanoate (AON), [acyl-carrier protein], and carbon dioxide. The polypeptide is 8-amino-7-oxononanoate synthase (Thermosipho melanesiensis (strain DSM 12029 / CIP 104789 / BI429)).